We begin with the raw amino-acid sequence, 298 residues long: GTP cyclohydrolase FolE2 (298 aa).

This sequence belongs to the GTP cyclohydrolase IV family.

The catalysed reaction is GTP + H2O = 7,8-dihydroneopterin 3'-triphosphate + formate + H(+). The protein operates within cofactor biosynthesis; 7,8-dihydroneopterin triphosphate biosynthesis; 7,8-dihydroneopterin triphosphate from GTP: step 1/1. In terms of biological role, converts GTP to 7,8-dihydroneopterin triphosphate. The chain is GTP cyclohydrolase FolE2 from Pseudomonas fluorescens (strain SBW25).